Consider the following 574-residue polypeptide: Pyruvate kinase PKLR (574 aa).

4 positions are modified to phosphoserine: Ser-2, Ser-19, Ser-26, and Ser-43. Arg-116 provides a ligand contact to substrate. Positions 118, 120, 156, and 157 each coordinate K(+). Asn-118–His-121 provides a ligand contact to ATP. ATP-binding residues include Arg-163 and Lys-250. Residue Ser-292 is modified to Phosphoserine. Lys-313 serves as a coordination point for substrate. Position 315 (Glu-315) interacts with Mn(2+). Substrate is bound by residues Gly-338, Asp-339, and Thr-371. Asp-339 is a Mn(2+) binding site. Beta-D-fructose 1,6-bisphosphate contacts are provided by residues Thr-475 to Ser-480, Trp-525, Arg-532, and Arg-559 to Tyr-564.

This sequence belongs to the pyruvate kinase family. Homotetramer. Requires Mg(2+) as cofactor. The cofactor is Mn(2+). K(+) is required as a cofactor.

It catalyses the reaction pyruvate + ATP = phosphoenolpyruvate + ADP + H(+). Its pathway is carbohydrate degradation; glycolysis; pyruvate from D-glyceraldehyde 3-phosphate: step 5/5. Allosterically activated by fructose 1,6-bisphosphate. In terms of biological role, pyruvate kinase that catalyzes the conversion of phosphoenolpyruvate to pyruvate with the synthesis of ATP, and which plays a key role in glycolysis. The protein is Pyruvate kinase PKLR (Pklr) of Rattus norvegicus (Rat).